A 373-amino-acid chain; its full sequence is 4-hydroxy-3-methylbut-2-en-1-yl diphosphate synthase (flavodoxin) (373 aa).

4 residues coordinate [4Fe-4S] cluster: Cys-270, Cys-273, Cys-305, and Glu-312.

It belongs to the IspG family. The cofactor is [4Fe-4S] cluster.

It carries out the reaction (2E)-4-hydroxy-3-methylbut-2-enyl diphosphate + oxidized [flavodoxin] + H2O + 2 H(+) = 2-C-methyl-D-erythritol 2,4-cyclic diphosphate + reduced [flavodoxin]. It participates in isoprenoid biosynthesis; isopentenyl diphosphate biosynthesis via DXP pathway; isopentenyl diphosphate from 1-deoxy-D-xylulose 5-phosphate: step 5/6. In terms of biological role, converts 2C-methyl-D-erythritol 2,4-cyclodiphosphate (ME-2,4cPP) into 1-hydroxy-2-methyl-2-(E)-butenyl 4-diphosphate. This is 4-hydroxy-3-methylbut-2-en-1-yl diphosphate synthase (flavodoxin) from Pectobacterium carotovorum subsp. carotovorum (strain PC1).